The primary structure comprises 773 residues: LON peptidase N-terminal domain and RING finger protein 1 (773 aa).

The interval 1-29 is disordered; it reads MSSPAVARTSPGGSREMAPAPQGRGRFWE. One copy of the TPR 1 repeat lies at 48–81; sequence WELLLRRGELLALGGHLKGALEAFAAALRRGAPA. An RING-type 1 zinc finger spans residues 123-159; the sequence is CLGCRGFLSEPVTVPCGHSYCRRCLRRELRARCRLCR. TPR repeat units lie at residues 212–244, 246–278, and 279–312; these read ARAA…EPSD, IVKI…LPDW, and PEVY…DEDF. The segment covering 359-370 has biased composition (polar residues); sequence EESQSLNEPSPK. The segment at 359–388 is disordered; it reads EESQSLNEPSPKQSEEIPEVTSEPVKGSLN. A Phosphoserine modification is found at Ser-431. An RING-type 2 zinc finger spans residues 479–517; it reads CSLCMRLFFEPVTTPCGHSFCKNCLERCLDHAPYCPLCK. Residues 558-768 enclose the Lon N-terminal domain; the sequence is TAELSHLTKN…KIQHILTYFS (211 aa).

In Homo sapiens (Human), this protein is LON peptidase N-terminal domain and RING finger protein 1 (LONRF1).